Consider the following 273-residue polypeptide: MAIRFFKPTTPGRRHGSVLNFDDLSSKKPEKKLTRGWSRAQGRNNKGRITTRHRGGGHKRLYREIDFIRNKIGTSAIVKSIEYDPNRTARIALVCYKDGEKRYILSPTGLKVGEMVIASPNAPITVGNTLPLYNIPLGTSVHNVELQPGAGGQLVRSAGSVAQIVAKEGQWATLHLPSGEYRLIPQKCWATVGRVGNLDNSNITLGKAGRSRWLSQRPHVRGSAMNPVDHPHGGGEGKAPIGRARPVSLWGKPALGVKTRKRKKFSNNLIINL.

Disordered regions lie at residues 30 to 55 (EKKL…RHRG) and 222 to 243 (GSAM…PIGR). Residues 45 to 55 (NKGRITTRHRG) show a composition bias toward basic residues.

Belongs to the universal ribosomal protein uL2 family. In terms of assembly, part of the 50S ribosomal subunit.

The protein resides in the plastid. The chain is Large ribosomal subunit protein uL2c (rpl2) from Prototheca wickerhamii.